The primary structure comprises 1042 residues: Aldehyde reductase lnaA (1042 aa).

Residues 29–425 are adenylation (A) domain; that stretch reads HAFLNPSAMA…GRRDHQVKVR (397 aa). In terms of domain architecture, Carrier spans 532 to 609; the sequence is DNEDSTRGKL…RLAGILEERI (78 aa). Position 569 is an O-(pantetheine 4'-phosphoryl)serine (Ser-569). Positions 655–897 are short-chain dehydrogenase/reductase (R) domain; it reads LTGATGFVGS…FVPVDYVNAV (243 aa).

This sequence belongs to the NRP synthetase family.

It carries out the reaction L-tyrosinal + AMP + diphosphate + NADP(+) = L-tyrosine + ATP + NADPH + H(+). It functions in the pathway secondary metabolite biosynthesis. Functionally, non-canonical nonribosomal peptide synthetase; part of the lna gene cluster that mediates the biosynthesis of diastereomeric piperazines. Lna and lnb clusters encode sets of enzymes that produce overlapping sets of previously undescribed metabolites such as piperazinomycin-like metabolites or morpholine. The lna and lnb biosynthetic pathways appear to be part of a signaling network that controls the formation of sclerotia, a resilient overwintering structure. One primary function of the non-canonical nonribosomal peptide synthetases lnaA and lnbA consists in the reduction of L-tyrosine. The presence in the clusters of tailoring enzymes such as the oxidoreductases lnaB, lnbB, lnaE or lnbE, as well as of the cytochrome P450 monooxygenases lnaC, lnaD, or lnbC, might explain formation of various diastereomeric piperazines. The protein is Aldehyde reductase lnaA of Aspergillus flavus (strain ATCC 200026 / FGSC A1120 / IAM 13836 / NRRL 3357 / JCM 12722 / SRRC 167).